The chain runs to 398 residues: Argininosuccinate synthase (398 aa).

Position 8-16 (8-16) interacts with ATP; that stretch reads AYSGGLDTT. Tyrosine 87 is an L-citrulline binding site. Glycine 117 provides a ligand contact to ATP. L-aspartate-binding residues include threonine 119, asparagine 123, and aspartate 124. Asparagine 123 is an L-citrulline binding site. 4 residues coordinate L-citrulline: arginine 127, serine 175, glutamate 259, and tyrosine 271.

This sequence belongs to the argininosuccinate synthase family. Type 1 subfamily. As to quaternary structure, homotetramer.

The protein resides in the cytoplasm. The catalysed reaction is L-citrulline + L-aspartate + ATP = 2-(N(omega)-L-arginino)succinate + AMP + diphosphate + H(+). Its pathway is amino-acid biosynthesis; L-arginine biosynthesis; L-arginine from L-ornithine and carbamoyl phosphate: step 2/3. The chain is Argininosuccinate synthase from Corynebacterium jeikeium (strain K411).